We begin with the raw amino-acid sequence, 311 residues long: Dihydroorotate dehydrogenase B (NAD(+)), catalytic subunit (311 aa).

Residues Ser24 and 48–49 contribute to the FMN site; that span reads KA. Substrate-binding positions include Lys48 and 72 to 76; that span reads NAIGL. Residues Asn104 and Asn132 each contribute to the FMN site. Asn132 contributes to the substrate binding site. The active-site Nucleophile is the Cys135. FMN-binding residues include Lys170 and Ile196. Position 197 to 198 (197 to 198) interacts with substrate; that stretch reads NT. FMN-binding positions include Gly222, 248 to 249, and 270 to 271; these read GG and GT.

It belongs to the dihydroorotate dehydrogenase family. Type 1 subfamily. In terms of assembly, heterotetramer of 2 PyrK and 2 PyrD type B subunits. Requires FMN as cofactor.

The protein resides in the cytoplasm. The catalysed reaction is (S)-dihydroorotate + NAD(+) = orotate + NADH + H(+). It functions in the pathway pyrimidine metabolism; UMP biosynthesis via de novo pathway; orotate from (S)-dihydroorotate (NAD(+) route): step 1/1. Its function is as follows. Catalyzes the conversion of dihydroorotate to orotate with NAD(+) as electron acceptor. The protein is Dihydroorotate dehydrogenase B (NAD(+)), catalytic subunit (pyrDB) of Lactococcus lactis subsp. lactis (strain IL1403) (Streptococcus lactis).